The following is a 588-amino-acid chain: Ankyrin repeat and SOCS box protein 15 (588 aa).

ANK repeat units lie at residues 75–104 (KGWF…KTLW), 110–139 (DGET…WPNT), 143–172 (KGET…SLDQ), 176–205 (KRWS…NVHL), 209–238 (FGVT…DVLA), 242–271 (DGAS…SGNI), 275–304 (AGHL…KHAI), 307–336 (SGLT…DVNS), 349–378 (ERKT…DPNL), 379–408 (DPLN…NVNC), and 416–444 (TRFP…QVEM). Residues 524 to 579 (WPEIRQILENPCSLKHLCRLKIRRLMGLQRLCQPTLMEKLSLPPTIQRYILFKEYD) enclose the SOCS box domain.

It belongs to the ankyrin SOCS box (ASB) family.

The protein operates within protein modification; protein ubiquitination. May be a substrate-recognition component of a SCF-like ECS (Elongin-Cullin-SOCS-box protein) E3 ubiquitin-protein ligase complex which mediates the ubiquitination and subsequent proteasomal degradation of target proteins. This chain is Ankyrin repeat and SOCS box protein 15 (ASB15), found in Bos taurus (Bovine).